Reading from the N-terminus, the 572-residue chain is Methionine--tRNA ligase (572 aa).

Residues 11–21 carry the 'HIGH' region motif; the sequence is PYVNHVPHLGT. Cys-143, Cys-146, Cys-156, and Cys-159 together coordinate Zn(2+). The 'KMSKS' region motif lies at 334 to 338; sequence QFSKS. ATP is bound at residue Lys-337.

Belongs to the class-I aminoacyl-tRNA synthetase family. MetG type 1 subfamily. Zn(2+) is required as a cofactor.

Its subcellular location is the cytoplasm. It carries out the reaction tRNA(Met) + L-methionine + ATP = L-methionyl-tRNA(Met) + AMP + diphosphate. Functionally, is required not only for elongation of protein synthesis but also for the initiation of all mRNA translation through initiator tRNA(fMet) aminoacylation. In Aeropyrum pernix (strain ATCC 700893 / DSM 11879 / JCM 9820 / NBRC 100138 / K1), this protein is Methionine--tRNA ligase (metG).